A 944-amino-acid polypeptide reads, in one-letter code: Nonsense-mediated mRNA decay factor SMG8 (944 aa).

2 disordered regions span residues 559–601 (LNNG…SNCC) and 629–654 (ASSEQLLNSEQNTTSSGTSSADTDNE). Acidic residues predominate over residues 568 to 589 (QDEDAEEDEAEEEEGQEQEQPT). Polar residues predominate over residues 629–640 (ASSEQLLNSEQN). Over residues 641–650 (TTSSGTSSAD) the composition is skewed to low complexity.

The protein belongs to the SMG8 family.

Functionally, involved in nonsense-mediated decay (NMD) of mRNAs containing premature stop codons. Probable component of kinase complex containing nonC and recruited to stalled ribosomes. This chain is Nonsense-mediated mRNA decay factor SMG8, found in Drosophila melanogaster (Fruit fly).